Here is a 339-residue protein sequence, read N- to C-terminus: Ketol-acid reductoisomerase (NADP(+)) (339 aa).

The region spanning 1 to 182 (MRVYYDSDAD…GGGRAGIIET (182 aa)) is the KARI N-terminal Rossmann domain. Residues 24–27 (YGSQ), Arg48, Ser51, and 83–86 (DEGQ) each bind NADP(+). His108 is an active-site residue. Position 134 (Gly134) interacts with NADP(+). Residues 183 to 328 (TFKEECETDL…EKLRAMMPWI (146 aa)) enclose the KARI C-terminal knotted domain. The Mg(2+) site is built by Asp191, Glu195, Glu227, and Glu231. Ser252 contributes to the substrate binding site.

The protein belongs to the ketol-acid reductoisomerase family. It depends on Mg(2+) as a cofactor.

The catalysed reaction is (2R)-2,3-dihydroxy-3-methylbutanoate + NADP(+) = (2S)-2-acetolactate + NADPH + H(+). It catalyses the reaction (2R,3R)-2,3-dihydroxy-3-methylpentanoate + NADP(+) = (S)-2-ethyl-2-hydroxy-3-oxobutanoate + NADPH + H(+). The protein operates within amino-acid biosynthesis; L-isoleucine biosynthesis; L-isoleucine from 2-oxobutanoate: step 2/4. It participates in amino-acid biosynthesis; L-valine biosynthesis; L-valine from pyruvate: step 2/4. Its function is as follows. Involved in the biosynthesis of branched-chain amino acids (BCAA). Catalyzes an alkyl-migration followed by a ketol-acid reduction of (S)-2-acetolactate (S2AL) to yield (R)-2,3-dihydroxy-isovalerate. In the isomerase reaction, S2AL is rearranged via a Mg-dependent methyl migration to produce 3-hydroxy-3-methyl-2-ketobutyrate (HMKB). In the reductase reaction, this 2-ketoacid undergoes a metal-dependent reduction by NADPH to yield (R)-2,3-dihydroxy-isovalerate. The chain is Ketol-acid reductoisomerase (NADP(+)) from Acidiphilium cryptum (strain JF-5).